The chain runs to 448 residues: MYVEKILQSLQKKYPYQKEFHQAVYEAITSLKPLLDSDKSYEKHAVLERLIEPEREIFFRVCWLDDNHQIQVNRGCRVEFNSAIGPYKGGLRFHPSVNESVIKFLGFEQVLKNSLTTLAMGGAKGGSDFDPKEKSEHEIMRFCQAFMNELYRHIGATTDVPAGDIGVGEREIGYLFGQYKKLVNRFEGVLTGKGLTYGGSLCRKEATGYGCVYFAEEMLQERNSSLEGKVCSVSGSGNVAIYTIEKLLQIGAKPVTASDSNGMIYDKDGIDLELLKEIKEARRGRIKEYALEKTSAKYTPTENYPKGGNAIWHVPCFAAFPSATENELSVLDAKTLLSNGCKCVAEGANMPSSNEAIELFLQAKISYGIGKAANAGGVSVSGLEMAQNASMHPWSFEVVDAKLHHIMKEIYKNVSQTAKEFKDPTNFVLGANIAGFRKVASAMIAQGV.

The substrate site is built by Lys-88, Gln-109, and Lys-112. The Proton donor role is filled by Lys-124. Gly-163 is a binding site for substrate. Positions 207 and 238 each coordinate NADP(+). Ser-381 contributes to the substrate binding site.

It belongs to the Glu/Leu/Phe/Val dehydrogenases family. Homohexamer.

It catalyses the reaction L-glutamate + NADP(+) + H2O = 2-oxoglutarate + NH4(+) + NADPH + H(+). In terms of biological role, catalyzes the reversible oxidative deamination of glutamate to alpha-ketoglutarate and ammonia. In Helicobacter pylori (strain J99 / ATCC 700824) (Campylobacter pylori J99), this protein is NADP-specific glutamate dehydrogenase (gdhA).